A 393-amino-acid polypeptide reads, in one-letter code: Bifunctional enzyme Fae/Hps (393 aa).

The segment at 1 to 161 is formaldehyde-activating enzyme; that stretch reads MYLVGEALIG…YEKDRAAHGI (161 aa). H17 acts as the Proton donor in catalysis. Substrate is bound by residues D19, L48, K66, T68, and Q83. The 3-hexulose-6-phosphate synthase stretch occupies residues 162–393; the sequence is MGFKVQRLWD…IDQFRIMTDF (232 aa).

It in the N-terminal section; belongs to the formaldehyde-activating enzyme family. In the C-terminal section; belongs to the HPS/KGPDC family. HPS subfamily.

The enzyme catalyses 5,6,7,8-tetrahydromethanopterin + formaldehyde = 5,10-methylenetetrahydromethanopterin + H2O. It carries out the reaction D-ribulose 5-phosphate + formaldehyde = D-arabino-hex-3-ulose 6-phosphate. Its pathway is carbohydrate biosynthesis; D-ribose 5-phosphate biosynthesis. In terms of biological role, catalyzes the condensation of formaldehyde with tetrahydromethanopterin (H(4)MPT) to 5,10-methylenetetrahydromethanopterin. Its function is as follows. Catalyzes the reversible formation of ribulose-5-phosphate and formaldehyde from 3-hexulose-6-phosphate. The chain is Bifunctional enzyme Fae/Hps from Methanoregula boonei (strain DSM 21154 / JCM 14090 / 6A8).